We begin with the raw amino-acid sequence, 423 residues long: Glycine amidinotransferase, mitochondrial (423 aa).

The transit peptide at 1–43 directs the protein to the mitochondrion; sequence MLRVRCLRGGSRGAEALHYIGSRLGRTVTGWVQRTFQSTQAAT. Phosphoserine occurs at positions 46 and 49. Asp-170 provides a ligand contact to arginine. Active-site residues include Asp-254 and His-303. Residues Asp-305, Arg-322, Ser-354, and Ser-355 each coordinate arginine. Residue Lys-385 is modified to N6-acetyllysine. The Amidino-cysteine intermediate role is filled by Cys-407.

It belongs to the amidinotransferase family. In terms of assembly, homodimer.

It localises to the mitochondrion inner membrane. The catalysed reaction is L-arginine + glycine = guanidinoacetate + L-ornithine. The enzyme catalyses 4-aminobutanoate + L-arginine = 4-guanidinobutanoate + L-ornithine. It carries out the reaction beta-alanine + L-arginine = 3-guanidinopropanoate + L-ornithine. It catalyses the reaction taurine + L-arginine = taurocyamine + L-ornithine. Its pathway is amine and polyamine biosynthesis; creatine biosynthesis; creatine from L-arginine and glycine: step 1/2. In terms of biological role, transamidinase that catalyzes the transfer of the amidino group of L-arginine onto the amino moiety of acceptor metabolites such as glycine, beta-alanine, gamma-aminobutyric acid (GABA) and taurine yielding the corresponding guanidine derivatives. Catalyzes the rate-limiting step of creatine biosynthesis, namely the transfer of the amidino group from L-arginine to glycine to generate guanidinoacetate, which is then methylated by GAMT to form creatine. Provides creatine as a source for ATP generation in tissues with high energy demands, in particular skeletal muscle, heart and brain. In Bos taurus (Bovine), this protein is Glycine amidinotransferase, mitochondrial (GATM).